The sequence spans 212 residues: uncharacterized protein (212 aa).

S-adenosyl-L-methionine contacts are provided by Gly53, Glu74, and Asp97.

This sequence belongs to the methyltransferase superfamily. YrrT family.

Could be a S-adenosyl-L-methionine-dependent methyltransferase. This is an uncharacterized protein from Bacillus cytotoxicus (strain DSM 22905 / CIP 110041 / 391-98 / NVH 391-98).